Consider the following 1006-residue polypeptide: E3 ubiquitin-protein ligase MIB1 (1006 aa).

The 69-residue stretch at 6–74 (NNRVMVEGVG…AYDLRILDSA (69 aa)) folds into the MIB/HERC2 1 domain. Residues 80–132 (HDGTMCDTCRQQPIIGIRWKCAECTNYDLCTVCYHGDKHHLRHRFYRITTPGS) form a ZZ-type zinc finger. Residues Cys85, Cys88, Cys100, Cys103, Cys109, Cys112, His118, and His122 each coordinate Zn(2+). Residues 143–221 (SKKITARGIF…MSDLKCVQDA (79 aa)) form the MIB/HERC2 2 domain. At Ser408 the chain carries Phosphoserine. ANK repeat units follow at residues 430 to 460 (DLNE…DVNG), 463 to 492 (AGHT…DVEA), 496 to 525 (DGDR…DLNA), 529 to 558 (RRQT…HPSL), 562 to 591 (EGDT…DVTI), 595 to 627 (NGFN…IVDE), 631 to 661 (DGYT…NLDI), 665 to 694 (NQQT…KLDI), and 698 to 729 (DGDT…KVDA). 2 RING-type zinc fingers span residues 819–854 (CMVC…LICK) and 866–901 (CVVC…VQCR). Positions 935–962 (QKDKDNTNVNADVQKLQQQLQDIKEQTM) form a coiled coil. The segment at 963 to 996 (CPVCLDRLKNMIFLCGHGTCQLCGDRMSECPICR) adopts an RING-type 3 zinc-finger fold.

Interacts with CEP131 and PCM1. Ubiquitinated; possibly via autoubiquitination. Ubiquitinated; this modification is inhibited in response to cellular stress, such as ultraviolet light (UV) radiation or heat shock. In terms of tissue distribution, widely expressed at low level. Expressed at higher level in spinal cord, ovary, whole brain, and all specific brain regions examined.

It is found in the cytoplasm. It localises to the cytoskeleton. The protein localises to the microtubule organizing center. The protein resides in the centrosome. Its subcellular location is the centriolar satellite. It is found in the cell membrane. The catalysed reaction is S-ubiquitinyl-[E2 ubiquitin-conjugating enzyme]-L-cysteine + [acceptor protein]-L-lysine = [E2 ubiquitin-conjugating enzyme]-L-cysteine + N(6)-ubiquitinyl-[acceptor protein]-L-lysine.. Its pathway is protein modification; protein ubiquitination. Functionally, E3 ubiquitin-protein ligase that mediates ubiquitination of Delta receptors, which act as ligands of Notch proteins. Positively regulates the Delta-mediated Notch signaling by ubiquitinating the intracellular domain of Delta, leading to endocytosis of Delta receptors. Probably mediates ubiquitination and subsequent proteasomal degradation of DAPK1, thereby antagonizing anti-apoptotic effects of DAPK1 to promote TNF-induced apoptosis. Involved in ubiquitination of centriolar satellite CEP131, CEP290 and PCM1 proteins and hence inhibits primary cilium formation in proliferating cells. Mediates 'Lys-63'-linked polyubiquitination of TBK1, which probably participates in kinase activation. In terms of biological role, (Microbial infection) During adenovirus infection, mediates ubiquitination of Core-capsid bridging protein. This allows viral genome delivery into nucleus for infection. The polypeptide is E3 ubiquitin-protein ligase MIB1 (MIB1) (Homo sapiens (Human)).